The primary structure comprises 422 residues: Tyrosine--tRNA ligase (422 aa).

Y37 contacts L-tyrosine. The 'HIGH' region signature appears at 42–51; sequence PTEESLHIGH. L-tyrosine contacts are provided by Y175 and Q179. The 'KMSKS' region signature appears at 235 to 239; that stretch reads KFGKT. K238 lines the ATP pocket. The 58-residue stretch at 357 to 414 folds into the S4 RNA-binding domain; that stretch reads KDLQEALVLTSLAQSRTQAKNMIISNSISINTEKIRKNHIFHEKDKLFGKFTLLSRGK.

Belongs to the class-I aminoacyl-tRNA synthetase family. TyrS type 1 subfamily. In terms of assembly, homodimer.

It localises to the cytoplasm. It carries out the reaction tRNA(Tyr) + L-tyrosine + ATP = L-tyrosyl-tRNA(Tyr) + AMP + diphosphate + H(+). Catalyzes the attachment of tyrosine to tRNA(Tyr) in a two-step reaction: tyrosine is first activated by ATP to form Tyr-AMP and then transferred to the acceptor end of tRNA(Tyr). This Buchnera aphidicola subsp. Acyrthosiphon pisum (strain Tuc7) protein is Tyrosine--tRNA ligase.